Here is a 317-residue protein sequence, read N- to C-terminus: Transaldolase (317 aa).

Lys132 functions as the Schiff-base intermediate with substrate in the catalytic mechanism.

Belongs to the transaldolase family. Type 1 subfamily. As to quaternary structure, homodimer.

It is found in the cytoplasm. It carries out the reaction D-sedoheptulose 7-phosphate + D-glyceraldehyde 3-phosphate = D-erythrose 4-phosphate + beta-D-fructose 6-phosphate. The protein operates within carbohydrate degradation; pentose phosphate pathway; D-glyceraldehyde 3-phosphate and beta-D-fructose 6-phosphate from D-ribose 5-phosphate and D-xylulose 5-phosphate (non-oxidative stage): step 2/3. In terms of biological role, transaldolase is important for the balance of metabolites in the pentose-phosphate pathway. The chain is Transaldolase from Histophilus somni (strain 129Pt) (Haemophilus somnus).